The sequence spans 381 residues: Probable G-protein coupled receptor 34 (381 aa).

Topologically, residues 1–61 (MRSHTITMTT…LLSTVLTTSY (61 aa)) are extracellular. N-linked (GlcNAc...) asparagine glycans are attached at residues asparagine 28, asparagine 36, and asparagine 42. The chain crosses the membrane as a helical span at residues 62 to 82 (SVIFIVGLVGNIIALYVFLGI). Over 83 to 88 (HRKRNS) the chain is Cytoplasmic. A helical transmembrane segment spans residues 89-109 (IQIYLLNVAIADLLLIFCLPF). At 110–128 (RIMYHINQNKWTLGVILCK) the chain is on the extracellular side. Cysteine 127 and cysteine 204 are oxidised to a cystine. The helical transmembrane segment at 129–149 (VVGTLFYMNMYISIILLGFIS) threads the bilayer. The Cytoplasmic segment spans residues 150-171 (LDRYIKINRSIQQRKAITTKQS). The chain crosses the membrane as a helical span at residues 172-192 (IYVCCIVWMLALGGFLTMIIL). Topologically, residues 193-216 (TLKKGGHNSTMCFHYRDKHNAKGE) are extracellular. The N-linked (GlcNAc...) asparagine glycan is linked to asparagine 200. The chain crosses the membrane as a helical span at residues 217-237 (AIFNFILVVMFWLIFLLIILS). The Cytoplasmic portion of the chain corresponds to 238-269 (YIKIGKNLLRISKRRSKFPNSGKYATTARNSF). The helical transmembrane segment at 270-290 (IVLIIFTICFVPYHAFRFIYI) threads the bilayer. Topologically, residues 291–310 (SSQLNVSSCYWKEIVHKTNE) are extracellular. The N-linked (GlcNAc...) asparagine glycan is linked to asparagine 295. A helical membrane pass occupies residues 311–331 (IMLVLSSFNSCLDPVMYFLMS). Residues 332 to 381 (SNIRKIMCQLLFRRFQGEPSRSESTSEFKPGYSLHDTSVAVKIQSSSKST) are Cytoplasmic-facing.

It belongs to the G-protein coupled receptor 1 family.

It localises to the cell membrane. G-protein-coupled receptor of lysophosphatidylserine (LysoPS) that plays different roles in immune response. Acts a damage-sensing receptor that triggers tissue repair upon recognition of dying neutrophils. Mechanistically, apoptotic neutrophils release lysophosphatydilserine that are recognized by type 3 innate lymphoid cells (ILC3s) via GPR34, which activates downstream PI3K-AKT and RAS-ERK signaling pathways leading to STAT3 activation and IL-22 production. Plays an important role in microglial function, controlling morphology and phagocytosis. The protein is Probable G-protein coupled receptor 34 (GPR34) of Gorilla gorilla gorilla (Western lowland gorilla).